Here is a 131-residue protein sequence, read N- to C-terminus: Protein DfrA (131 aa).

The protein belongs to the RutC family.

The polypeptide is Protein DfrA (dfrA) (Myxococcus xanthus).